Reading from the N-terminus, the 827-residue chain is Periplasmic nitrate reductase (827 aa).

Residues 1 to 32 (MNLSRRDFMKANAALAAASVAGLIIPVKNVNA) constitute a signal peptide (tat-type signal). Residues 37 to 93 (ITWDKAVCRFCGTGCAVLVGTKDGRVVASQGDPDAEVNRGLNCIKGYFLPKIMYGKD) form the 4Fe-4S Mo/W bis-MGD-type domain. [4Fe-4S] cluster-binding residues include C44, C47, C51, and C79. Mo-bis(molybdopterin guanine dinucleotide) is bound by residues K81, Q148, N173, C177, 210–217 (WGSNMAEM), 242–246 (STFEH), 261–263 (QSD), M372, Q376, N482, 508–509 (SD), K531, D558, and 717–726 (TGRILEHWHT). Residue F793 coordinates substrate. Mo-bis(molybdopterin guanine dinucleotide)-binding residues include N801 and K818.

It belongs to the prokaryotic molybdopterin-containing oxidoreductase family. NasA/NapA/NarB subfamily. In terms of assembly, component of the periplasmic nitrate reductase NapAB complex composed of NapA and NapB. [4Fe-4S] cluster serves as cofactor. Requires Mo-bis(molybdopterin guanine dinucleotide) as cofactor. Post-translationally, predicted to be exported by the Tat system. The position of the signal peptide cleavage has not been experimentally proven.

Its subcellular location is the periplasm. The catalysed reaction is 2 Fe(II)-[cytochrome] + nitrate + 2 H(+) = 2 Fe(III)-[cytochrome] + nitrite + H2O. Functionally, catalytic subunit of the periplasmic nitrate reductase complex NapAB. Receives electrons from NapB and catalyzes the reduction of nitrate to nitrite. The sequence is that of Periplasmic nitrate reductase from Histophilus somni (strain 2336) (Haemophilus somnus).